A 56-amino-acid chain; its full sequence is Ovomucoid (56 aa).

The region spanning 6 to 56 (VDCSDHPKPACLQEQKPICGSDNKTYDNKCSFCNAVVDSNGTLTLSHFGKC) is the Kazal-like domain. 3 disulfide bridges follow: cysteine 8–cysteine 38, cysteine 16–cysteine 35, and cysteine 24–cysteine 56. N-linked (GlcNAc...) asparagine glycosylation is present at asparagine 45.

The protein localises to the secreted. The chain is Ovomucoid from Ortalis vetula (Plain chachalaca).